Consider the following 479-residue polypeptide: Ribulose bisphosphate carboxylase large chain (479 aa).

Residues 1–2 (MS) constitute a propeptide that is removed on maturation. The substrate site is built by N123 and T173. K175 acts as the Proton acceptor in catalysis. Residue K177 coordinates substrate. Mg(2+) is bound by residues K201, D203, and E204. K201 is modified (N6-carboxylysine). S208 is subject to Phosphoserine. The active-site Proton acceptor is H294. 2 residues coordinate substrate: R295 and H327. T330 carries the phosphothreonine modification. S379 provides a ligand contact to substrate.

This sequence belongs to the RuBisCO large chain family. Type I subfamily. As to quaternary structure, heterohexadecamer of 8 large chains and 8 small chains; disulfide-linked. The disulfide link is formed within the large subunit homodimers. The cofactor is Mg(2+). The disulfide bond which can form in the large chain dimeric partners within the hexadecamer appears to be associated with oxidative stress and protein turnover.

The protein localises to the plastid. It is found in the chloroplast. The catalysed reaction is 2 (2R)-3-phosphoglycerate + 2 H(+) = D-ribulose 1,5-bisphosphate + CO2 + H2O. It catalyses the reaction D-ribulose 1,5-bisphosphate + O2 = 2-phosphoglycolate + (2R)-3-phosphoglycerate + 2 H(+). RuBisCO catalyzes two reactions: the carboxylation of D-ribulose 1,5-bisphosphate, the primary event in carbon dioxide fixation, as well as the oxidative fragmentation of the pentose substrate in the photorespiration process. Both reactions occur simultaneously and in competition at the same active site. In Crucihimalaya wallichii (Rock-cress), this protein is Ribulose bisphosphate carboxylase large chain.